Here is a 239-residue protein sequence, read N- to C-terminus: Transcriptional regulatory protein DcuR (239 aa).

The 119-residue stretch at 3–121 (NVLIIDDDAM…RFEEALTGWR (119 aa)) folds into the Response regulatory domain. 4-aspartylphosphate is present on D56. The H-T-H motif DNA-binding region spans 181 to 200 (TDELANEVNISRVSCRKYLI).

In terms of processing, phosphorylated and activated by DcuS.

It is found in the cytoplasm. Its function is as follows. Member of the two-component regulatory system DcuR/DcuS. Involved in the C4-dicarboxylate-stimulated regulation of the genes encoding the anaerobic fumarate respiratory system (frdABCD; nuoAN; dcuB; dcuC; sdhCDAB; etc.). Weakly regulates the aerobic C4-dicarboxylate transporter dctA. This is Transcriptional regulatory protein DcuR (dcuR) from Shigella flexneri.